A 207-amino-acid polypeptide reads, in one-letter code: Thiamine-phosphate synthase (207 aa).

4-amino-2-methyl-5-(diphosphooxymethyl)pyrimidine is bound by residues 36 to 40 and D68; that span reads QMRIK. Mg(2+)-binding residues include D69 and D88. S106 provides a ligand contact to 4-amino-2-methyl-5-(diphosphooxymethyl)pyrimidine. Residue 132–134 participates in 2-[(2R,5Z)-2-carboxy-4-methylthiazol-5(2H)-ylidene]ethyl phosphate binding; sequence TKT. Residue K135 coordinates 4-amino-2-methyl-5-(diphosphooxymethyl)pyrimidine. Residues G162 and 182–183 contribute to the 2-[(2R,5Z)-2-carboxy-4-methylthiazol-5(2H)-ylidene]ethyl phosphate site; that span reads IS.

Belongs to the thiamine-phosphate synthase family. Mg(2+) is required as a cofactor.

The catalysed reaction is 2-[(2R,5Z)-2-carboxy-4-methylthiazol-5(2H)-ylidene]ethyl phosphate + 4-amino-2-methyl-5-(diphosphooxymethyl)pyrimidine + 2 H(+) = thiamine phosphate + CO2 + diphosphate. The enzyme catalyses 2-(2-carboxy-4-methylthiazol-5-yl)ethyl phosphate + 4-amino-2-methyl-5-(diphosphooxymethyl)pyrimidine + 2 H(+) = thiamine phosphate + CO2 + diphosphate. It catalyses the reaction 4-methyl-5-(2-phosphooxyethyl)-thiazole + 4-amino-2-methyl-5-(diphosphooxymethyl)pyrimidine + H(+) = thiamine phosphate + diphosphate. It functions in the pathway cofactor biosynthesis; thiamine diphosphate biosynthesis; thiamine phosphate from 4-amino-2-methyl-5-diphosphomethylpyrimidine and 4-methyl-5-(2-phosphoethyl)-thiazole: step 1/1. Its function is as follows. Condenses 4-methyl-5-(beta-hydroxyethyl)thiazole monophosphate (THZ-P) and 2-methyl-4-amino-5-hydroxymethyl pyrimidine pyrophosphate (HMP-PP) to form thiamine monophosphate (TMP). This Pyrococcus furiosus (strain ATCC 43587 / DSM 3638 / JCM 8422 / Vc1) protein is Thiamine-phosphate synthase.